A 202-amino-acid polypeptide reads, in one-letter code: Histone H1 (202 aa).

Disordered regions lie at residues 1–50 and 114–202; these read MTAI…VTHP and YKLS…KIAV. The segment covering 18 to 38 has biased composition (basic and acidic residues); the sequence is EASKVKEQAPATDKKPRAPKE. The 71-residue stretch at 48 to 118 folds into the H15 domain; sequence THPPYFQMIK…KIKASYKLSE (71 aa). Over residues 160–202 the composition is skewed to basic residues; the sequence is KAKATPKPKKVGAKRTRKSTPAKAKQPKSIKSPAAKRAKKIAV.

It belongs to the histone H1/H5 family.

Its subcellular location is the nucleus. It localises to the chromosome. In terms of biological role, histones H1 are necessary for the condensation of nucleosome chains into higher-order structures. This Solanum pennellii (Tomato) protein is Histone H1.